The sequence spans 666 residues: Calmodulin-binding receptor kinase CaMRLK (666 aa).

An N-terminal signal peptide occupies residues 1 to 17; sequence MFLKLFLLLSLVSFSHS. Residues 18–297 lie on the Extracellular side of the membrane; it reads DSSSTVSCPN…KTHRTNHTPL (280 aa). N-linked (GlcNAc...) asparagine glycosylation is found at asparagine 27, asparagine 45, asparagine 52, asparagine 68, asparagine 78, asparagine 89, asparagine 110, asparagine 126, asparagine 137, asparagine 148, asparagine 154, asparagine 189, asparagine 212, asparagine 229, and asparagine 261. LRR repeat units follow at residues 79–103, 105–127, 130–152, 153–177, 178–197, 198–224, and 226–246; these read LTRLRVLDLSNNSLDGSLPTWLWSM, GLVSVNLSRNRFGGSIRVIPVNG, LSAVKELNLSFNRFKHAVNFTGF, TNLTTLDLSHNSLGVLPLGLGSLSG, LRHLDISRCKINGSVKPISG, LKSLDYLDLSENSMNGSFPVDFPNLNH, and QFLNLSANRFSGSVGFDKYRK. A helical membrane pass occupies residues 298 to 318; it reads VIGLSSSLGALIIVIFAAAII. The interval 319–337 is calmodulin binding; sequence LIRRRMKSARTKSRWAISN. The Cytoplasmic portion of the chain corresponds to 319–666; the sequence is LIRRRMKSAR…LLKDIRTVSR (348 aa). In terms of domain architecture, Protein kinase spans 395 to 661; it reads FGTESVISDG…QQVLGLLKDI (267 aa). Residues 401–409 and lysine 423 each bind ATP; that span reads ISDGTCGPL.

It belongs to the protein kinase superfamily. Ser/Thr protein kinase family. Binds calmodulin (CaM) in a calcium-dependent manner. Interacts with CAM1, but not with CAM8. The cofactor is Mn(2+). Requires Mg(2+) as cofactor. In terms of processing, calmodulin (CaM)-independent autophosphorylation. Expressed in reproductive and vegetative tissues, with higher levels in seedlings and flowers, but not in leaves.

Its subcellular location is the cell membrane. The catalysed reaction is L-seryl-[protein] + ATP = O-phospho-L-seryl-[protein] + ADP + H(+). It catalyses the reaction L-threonyl-[protein] + ATP = O-phospho-L-threonyl-[protein] + ADP + H(+). Its activity is regulated as follows. Not stimulated by calmodulin (CaM). Can phosphorylate the myelin basic protein in vitro. Required for endosperm development in embryos. Maybe involved in auxin and osmotic stress responses. The protein is Calmodulin-binding receptor kinase CaMRLK of Arabidopsis thaliana (Mouse-ear cress).